Reading from the N-terminus, the 447-residue chain is UPF0210 protein Lreu_0940 (447 aa).

This sequence belongs to the UPF0210 family. Homodimer.

This chain is UPF0210 protein Lreu_0940, found in Limosilactobacillus reuteri (strain DSM 20016) (Lactobacillus reuteri).